The chain runs to 735 residues: Muskelin (735 aa).

A2 is modified (N-acetylalanine). The 33-residue stretch at 172-204 (REQEAIRLCLKHFRQHNYTEAFESLQKKTKIAL) folds into the LisH domain. The 53-residue stretch at 206-258 (HPMLTDMHDKLVLKGDFDACEELIEKAVNDGLFNQYISQQEYKPRWSQIIPKS) folds into the CTLH domain. Kelch repeat units lie at residues 284 to 330 (TVYL…SCHK), 339 to 391 (QIYT…FDHQ), 400 to 458 (MIYT…SRIG), 469 to 515 (CLYV…TGFT), 526 to 578 (EIHV…SLQE), and 597 to 651 (VHYL…AQMD). Residues 701–735 (DHTYAQRTQLFDTLVNFFPDSMTPPKGNLVDLITL) are important for location in the cytosol.

As to quaternary structure, homodimer; may form higher oligomers. Identified in the CTLH complex that contains GID4, RANBP9 and/or RANBP10, MKLN1, MAEA, RMND5A (or alternatively its paralog RMND5B), GID8, ARMC8, WDR26 and YPEL5. Within this complex, MAEA, RMND5A (or alternatively its paralog RMND5B), GID8, WDR26, and RANBP9 and/or RANBP10 form the catalytic core, while GID4, MKLN1, ARMC8 and YPEL5 have ancillary roles. Interacts with RANBP9. Part of a complex consisting of RANBP9, MKLN1 and GID8. Interacts with GABRA1. Interacts with the C-terminal tail of PTGER3. In terms of tissue distribution, detected in brain, especially in hippocampus and cerebellum (at protein level).

It is found in the cytoplasm. The protein resides in the cytosol. It localises to the nucleus. Its subcellular location is the nucleoplasm. The protein localises to the cell projection. It is found in the ruffle. The protein resides in the cell cortex. It localises to the synapse. Its subcellular location is the postsynapse. Functionally, component of the CTLH E3 ubiquitin-protein ligase complex that selectively accepts ubiquitin from UBE2H and mediates ubiquitination and subsequent proteasomal degradation of the transcription factor HBP1. Required for internalization of the GABA receptor GABRA1 from the cell membrane via endosomes and subsequent GABRA1 degradation. Acts as a mediator of cell spreading and cytoskeletal responses to the extracellular matrix component THBS1. The sequence is that of Muskelin (Mkln1) from Mus musculus (Mouse).